Consider the following 155-residue polypeptide: Small ribosomal subunit protein uS7 (155 aa).

It belongs to the universal ribosomal protein uS7 family. In terms of assembly, part of the 30S ribosomal subunit. Contacts proteins S9 and S11.

Functionally, one of the primary rRNA binding proteins, it binds directly to 16S rRNA where it nucleates assembly of the head domain of the 30S subunit. Is located at the subunit interface close to the decoding center, probably blocks exit of the E-site tRNA. This chain is Small ribosomal subunit protein uS7, found in Corynebacterium aurimucosum (strain ATCC 700975 / DSM 44827 / CIP 107346 / CN-1) (Corynebacterium nigricans).